Here is a 493-residue protein sequence, read N- to C-terminus: UDP-N-acetylmuramoyl-L-alanyl-D-glutamate--2,6-diaminopimelate ligase (493 aa).

Thr32 lines the UDP-N-acetyl-alpha-D-muramoyl-L-alanyl-D-glutamate pocket. 110 to 116 (GTNGKTT) is an ATP binding site. Residues Asn151, 152 to 153 (TT), Ser179, and Arg187 contribute to the UDP-N-acetyl-alpha-D-muramoyl-L-alanyl-D-glutamate site. At Lys219 the chain carries N6-carboxylysine. Meso-2,6-diaminopimelate contacts are provided by residues Arg386, 410-413 (DNPR), Gly460, and Glu464. The Meso-diaminopimelate recognition motif motif lies at 410-413 (DNPR).

The protein belongs to the MurCDEF family. MurE subfamily. Mg(2+) is required as a cofactor. In terms of processing, carboxylation is probably crucial for Mg(2+) binding and, consequently, for the gamma-phosphate positioning of ATP.

The protein resides in the cytoplasm. It carries out the reaction UDP-N-acetyl-alpha-D-muramoyl-L-alanyl-D-glutamate + meso-2,6-diaminopimelate + ATP = UDP-N-acetyl-alpha-D-muramoyl-L-alanyl-gamma-D-glutamyl-meso-2,6-diaminopimelate + ADP + phosphate + H(+). It participates in cell wall biogenesis; peptidoglycan biosynthesis. In terms of biological role, catalyzes the addition of meso-diaminopimelic acid to the nucleotide precursor UDP-N-acetylmuramoyl-L-alanyl-D-glutamate (UMAG) in the biosynthesis of bacterial cell-wall peptidoglycan. The protein is UDP-N-acetylmuramoyl-L-alanyl-D-glutamate--2,6-diaminopimelate ligase of Lactiplantibacillus plantarum (strain ATCC BAA-793 / NCIMB 8826 / WCFS1) (Lactobacillus plantarum).